Consider the following 814-residue polypeptide: MEATKTDLRLLLECLKYQMKWPGSQKQALLTIISICKQNDQYVEFLREIGGISFIYNLSKSSTFSQVKETALFTLASLAELHESCKQALCREEMFRDFVQHLEQEMPLTEKRVAVYMLSVLVANNRCGQTLAKTSRCIEALLRLFRQSFPVPGESYEQLQLWITVSSALCGSVNNPQNEENQNVCMSVFPEIKPWLQEVALPRAELAQPLCSFIGMTVANNPCAQEYFVSVGGLDSLSDTLTRVLSQSTHSASVCKMATIITKTLSACISNNELLGSSLSKLRVIPGLLRLLSSPNLDPQDQLAVVLTTGHLTDACVEQQSQLLSAGGLPIIITLLTETSDEELKKAAIFVLHTCNRITESLGPGMSTIDPNECDREGQWRSAGQILQRIQLLEKKIGKKLWERDPESQPHSMKRSDSHVECDDELWEGSVMRKVKGNHRVYGEFRAIPAGTPITSEILQDQDSLQPDSSEEGLSPVQVNLFKGPNWEKSKKRKHKQKRENERSDNQETRREGVNKRELKRNVKSERVVKRLKMMNLESDDDGYELLQNCSTPTEGNRDTQGPDIFRHPDPVKRNQREPSLSDDNMSLCTELLDKEINKFLKPPSASKSNTLRCAGCVKHMNELNSRSFGAVLSSCRFQCDFHLTLREAEDRFRRSQPLKRTSHTPTHTHINTHRKIREHSTSAQEHKQKSKREKHKLSHQSSDRCYRLTPLRRPRETYSPDVKQWTDHRHLKKSSEDARSKNSSGRHRKRQNWSDKELCYLTKGVKRFGHSWNTILWKYPFHPGRTNVDLAKKFYHMQKAKAQGVDLSVAKAL.

ARM repeat units follow at residues 93-136 (EMFR…KTSR) and 327-368 (GGLP…GMST). Disordered stretches follow at residues 461–521 (DQDS…ELKR), 551–584 (STPT…LSDD), and 653–753 (FRRS…KRQN). Residues 488-512 (EKSKKRKHKQKRENERSDNQETRRE) are a coiled coil. 3 stretches are compositionally biased toward basic and acidic residues: residues 499-521 (RENE…ELKR), 565-577 (IFRH…RNQR), and 679-688 (EHSTSAQEHK). Basic residues predominate over residues 689–699 (QKSKREKHKLS). Residues 714–741 (RPRETYSPDVKQWTDHRHLKKSSEDARS) are compositionally biased toward basic and acidic residues. The 54-residue stretch at 746 to 799 (GRHRKRQNWSDKELCYLTKGVKRFGHSWNTILWKYPFHPGRTNVDLAKKFYHMQ) folds into the Myb-like domain.

This sequence belongs to the TERB1 family. Component of the MAJIN-TERB1-TERB2 complex.

It is found in the chromosome. Its subcellular location is the telomere. The protein localises to the nucleus inner membrane. Functionally, meiosis-specific telomere-associated protein involved in meiotic telomere attachment to the nucleus inner membrane, a crucial step for homologous pairing and synapsis. Component of the MAJIN-TERB1-TERB2 complex, which promotes telomere cap exchange by mediating attachment of telomeric DNA to the inner nuclear membrane and replacement of the protective cap of telomeric chromosomes: in early meiosis, the MAJIN-TERB1-TERB2 complex associates with telomeric DNA and the shelterin/telosome complex. During prophase, the complex matures and promotes release of the shelterin/telosome complex from telomeric DNA. In the MAJIN-TERB1-TERB2 complex, TERB1 probably mediates association with the shelterin/telosome complex. This Danio rerio (Zebrafish) protein is Telomere repeats-binding bouquet formation protein 1 (ccdc79).